A 363-amino-acid chain; its full sequence is Phosrestin-2 (363 aa).

This sequence belongs to the arrestin family.

This is Phosrestin-2 (ARR1) from Calliphora vicina (Blue blowfly).